Consider the following 135-residue polypeptide: Ribosome-binding factor A (135 aa).

The protein belongs to the RbfA family. In terms of assembly, monomer. Binds 30S ribosomal subunits, but not 50S ribosomal subunits or 70S ribosomes.

The protein localises to the cytoplasm. One of several proteins that assist in the late maturation steps of the functional core of the 30S ribosomal subunit. Associates with free 30S ribosomal subunits (but not with 30S subunits that are part of 70S ribosomes or polysomes). Required for efficient processing of 16S rRNA. May interact with the 5'-terminal helix region of 16S rRNA. The protein is Ribosome-binding factor A of Methylobacterium nodulans (strain LMG 21967 / CNCM I-2342 / ORS 2060).